The following is a 630-amino-acid chain: Telomere repeat-binding protein 5 (630 aa).

3 disordered regions span residues 1–38 (MVLQ…SENH), 56–78 (EGGN…CAVK), and 308–327 (YTAS…GSPR). The span at 57–71 (GGNSSSSSNNTSGNN) shows a compositional bias: low complexity. Residues 309 to 325 (TASQSEETNKNEGQSGS) are compositionally biased toward polar residues. One can recognise a Ubiquitin-like domain in the interval 354–433 (VKLGIKSFRV…SDTLGFCLEP (80 aa)). A disordered region spans residues 463–489 (LPSPGKHAKPSNSVESDLDSKPSAPNR). The HTH myb-type domain occupies 523 to 582 (AQRRIRRPFSVAEVEALVQAVERLGTGRWRDVKLRAFDNAKHRTYVDLKDKWKTLVHTAR). Positions 551–578 (WRDVKLRAFDNAKHRTYVDLKDKWKTLV) form a DNA-binding region, H-T-H motif.

In terms of assembly, homodimer. Expressed ubiquitously.

The protein resides in the nucleus. In terms of biological role, binds specifically to the plant telomeric double-stranded DNA sequences. At least 6 repeats of telomeric sequences are required for binding. The sequence is that of Telomere repeat-binding protein 5 (TRP5) from Arabidopsis thaliana (Mouse-ear cress).